Reading from the N-terminus, the 428-residue chain is Histone-lysine N-methyltransferase SMYD3 (428 aa).

Met1 is subject to N-acetylmethionine. An SET domain is found at 4–240; it reads LKVEKFATAK…VGEELTICYL (237 aa). 14–16 provides a ligand contact to S-adenosyl-L-methionine; sequence RGN. Thr22 bears the Phosphothreonine mark. Zn(2+)-binding residues include Cys49, Cys52, Cys62, Cys65, Cys71, Cys75, His83, and Cys87. Residues 49 to 87 form an MYND-type zinc finger; sequence CDRCLLGKEKLMRCSQCRVAKYCSAKCQKKAWPDHKREC. S-adenosyl-L-methionine is bound by residues Tyr124, Asn132, Asn181, 205 to 206, Tyr239, and Phe259; that span reads NH. Residues 272 to 428 are C-terminal domain; essential for histone methyltransferase activity, nuclear localization and mediates interaction with HSP90AA1; sequence DADMLTGDEQ…EECDANIRAS (157 aa).

The protein belongs to the class V-like SAM-binding methyltransferase superfamily. Histone-lysine methyltransferase family. As to quaternary structure, interacts with HSPCA. Interacts with HELZ. Interacts with POLR2A; the interaction may be indirect and may be mediated by HELZ. Interacts with HSP90AA1; this interaction enhances SMYD3 histone-lysine N-methyltransferase. In terms of tissue distribution, expressed in skeletal muscles and testis. Overexpressed in a majority of colorectal and hepatocellular carcinomas.

The protein localises to the cytoplasm. It localises to the nucleus. It catalyses the reaction L-lysyl(4)-[histone H3] + 3 S-adenosyl-L-methionine = N(6),N(6),N(6)-trimethyl-L-lysyl(4)-[histone H3] + 3 S-adenosyl-L-homocysteine + 3 H(+). With respect to regulation, histone methyltransferase activity strongly stimulated by HSPCA. In terms of biological role, histone methyltransferase. Specifically methylates 'Lys-4' of histone H3, inducing di- and tri-methylation, but not monomethylation. Also methylates 'Lys-5' of histone H4. Plays an important role in transcriptional activation as a member of an RNA polymerase complex. Binds DNA containing 5'-CCCTCC-3' or 5'-GAGGGG-3' sequences. This is Histone-lysine N-methyltransferase SMYD3 (SMYD3) from Homo sapiens (Human).